The primary structure comprises 253 residues: 3-deoxy-manno-octulosonate cytidylyltransferase (253 aa).

The protein belongs to the KdsB family.

It is found in the cytoplasm. It catalyses the reaction 3-deoxy-alpha-D-manno-oct-2-ulosonate + CTP = CMP-3-deoxy-beta-D-manno-octulosonate + diphosphate. Its pathway is nucleotide-sugar biosynthesis; CMP-3-deoxy-D-manno-octulosonate biosynthesis; CMP-3-deoxy-D-manno-octulosonate from 3-deoxy-D-manno-octulosonate and CTP: step 1/1. It functions in the pathway bacterial outer membrane biogenesis; lipopolysaccharide biosynthesis. In terms of biological role, activates KDO (a required 8-carbon sugar) for incorporation into bacterial lipopolysaccharide in Gram-negative bacteria. This Acinetobacter baumannii (strain ATCC 17978 / DSM 105126 / CIP 53.77 / LMG 1025 / NCDC KC755 / 5377) protein is 3-deoxy-manno-octulosonate cytidylyltransferase.